We begin with the raw amino-acid sequence, 205 residues long: ATP-dependent Clp protease proteolytic subunit (205 aa).

Residue serine 109 is the Nucleophile of the active site. Histidine 134 is a catalytic residue.

The protein belongs to the peptidase S14 family. Fourteen ClpP subunits assemble into 2 heptameric rings which stack back to back to give a disk-like structure with a central cavity, resembling the structure of eukaryotic proteasomes.

The protein localises to the cytoplasm. It catalyses the reaction Hydrolysis of proteins to small peptides in the presence of ATP and magnesium. alpha-casein is the usual test substrate. In the absence of ATP, only oligopeptides shorter than five residues are hydrolyzed (such as succinyl-Leu-Tyr-|-NHMec, and Leu-Tyr-Leu-|-Tyr-Trp, in which cleavage of the -Tyr-|-Leu- and -Tyr-|-Trp bonds also occurs).. Functionally, cleaves peptides in various proteins in a process that requires ATP hydrolysis. Has a chymotrypsin-like activity. Plays a major role in the degradation of misfolded proteins. This Baumannia cicadellinicola subsp. Homalodisca coagulata protein is ATP-dependent Clp protease proteolytic subunit.